Consider the following 513-residue polypeptide: uncharacterized protein (513 aa).

The region spanning 11 to 219 (HLEVERKFDV…SKLARVLGAT (209 aa)) is the CYTH domain. One can recognise a CHAD domain in the interval 228-506 (PQPPADPVHR…LEAALRKLDK (279 aa)).

This is an uncharacterized protein from Mycobacterium tuberculosis (strain ATCC 25618 / H37Rv).